We begin with the raw amino-acid sequence, 187 residues long: uncharacterized protein (187 aa).

This is an uncharacterized protein from Saccharomyces cerevisiae (strain ATCC 204508 / S288c) (Baker's yeast).